The chain runs to 214 residues: Adenylate kinase (214 aa).

10 to 15 (GAGKGT) serves as a coordination point for ATP. The NMP stretch occupies residues 30–59 (STGDMLRAAIKAGTELGKQAKAVIDAGQLV). AMP-binding positions include T31, R36, 57–59 (QLV), 85–88 (GFPR), and Q92. Residues 122-159 (GRRAHLPSGRTYHVVYNPPKVEGKDDVTGEDLVVRDDD) are LID. ATP is bound by residues R123 and 132–133 (TY). AMP is bound by residues R156 and R167. Residue K200 participates in ATP binding.

This sequence belongs to the adenylate kinase family. In terms of assembly, monomer.

It localises to the cytoplasm. It catalyses the reaction AMP + ATP = 2 ADP. Its pathway is purine metabolism; AMP biosynthesis via salvage pathway; AMP from ADP: step 1/1. Its function is as follows. Catalyzes the reversible transfer of the terminal phosphate group between ATP and AMP. Plays an important role in cellular energy homeostasis and in adenine nucleotide metabolism. The chain is Adenylate kinase from Vibrio parahaemolyticus serotype O3:K6 (strain RIMD 2210633).